We begin with the raw amino-acid sequence, 155 residues long: Nuclear cap-binding protein subunit 2 (155 aa).

MRNA-binding positions include Y19, Y42, 111-115 (RTDWD), 122-126 (RQYGR), and 132-133 (QV). The region spanning 39-117 (NTLYVGNLSF…RIIRTDWDAG (79 aa)) is the RRM domain. A disordered region spans residues 122-155 (RQYGRGKSGGQVRDEYRQDYDPARGGYGKVVSRP). A compositionally biased stretch (basic and acidic residues) spans 133–143 (VRDEYRQDYDP).

The protein belongs to the RRM NCBP2 family. As to quaternary structure, component of the nuclear cap-binding complex (CBC), a heterodimer composed of ncbp1/cbp80 and ncbp2/cbp20 that interacts with m7GpppG-capped RNA.

It is found in the nucleus. It localises to the cytoplasm. Component of the cap-binding complex (CBC), which binds co-transcriptionally to the 5' cap of pre-mRNAs and is involved in various processes such as pre-mRNA splicing, translation regulation, nonsense-mediated mRNA decay, RNA-mediated gene silencing (RNAi) by microRNAs (miRNAs) and mRNA export. The CBC complex is involved in mRNA export from the nucleus, leading to the recruitment of the mRNA export machinery to the 5' end of mRNA and to mRNA export in a 5' to 3' direction through the nuclear pore. The CBC complex is also involved in mediating U snRNA and intronless mRNAs export from the nucleus. The CBC complex is essential for a pioneer round of mRNA translation, before steady state translation when the CBC complex is replaced by cytoplasmic cap-binding protein eIF4E. The pioneer round of mRNA translation mediated by the CBC complex plays a central role in nonsense-mediated mRNA decay (NMD), NMD only taking place in mRNAs bound to the CBC complex, but not on eIF4E-bound mRNAs. The CBC complex enhances NMD in mRNAs containing at least one exon-junction complex (EJC), promoting the interaction between upf1 and upf2. The CBC complex is also involved in 'failsafe' NMD, which is independent of the EJC complex, while it does not participate in Staufen-mediated mRNA decay (SMD). During cell proliferation, the CBC complex is also involved in microRNAs (miRNAs) biogenesis via its interaction with srrt/ars2, thereby being required for miRNA-mediated RNA interference. The CBC complex also acts as a negative regulator of parn, thereby acting as an inhibitor of mRNA deadenylation. In the CBC complex, ncbp2/cbp20 recognizes and binds capped RNAs (m7GpppG-capped RNA) but requires ncbp1/cbp80 to stabilize the movement of its N-terminal loop and lock the CBC into a high affinity cap-binding state with the cap structure. The conventional cap-binding complex with NCBP2 binds both small nuclear RNA (snRNA) and messenger (mRNA) and is involved in their export from the nucleus. This is Nuclear cap-binding protein subunit 2 (ncbp2) from Salmo salar (Atlantic salmon).